The primary structure comprises 352 residues: Molybdenum import ATP-binding protein ModC (352 aa).

One can recognise an ABC transporter domain in the interval 1-229 (MLELNFSQTL…SVMNPWLPKE (229 aa)). An ATP-binding site is contributed by 31–38 (GVSGAGKT). Residues 289-352 (QTSIRNVLRA…AQIKSVSITA (64 aa)) form the Mop domain.

The protein belongs to the ABC transporter superfamily. Molybdate importer (TC 3.A.1.8) family. As to quaternary structure, the complex is composed of two ATP-binding proteins (ModC), two transmembrane proteins (ModB) and a solute-binding protein (ModA).

The protein localises to the cell inner membrane. The enzyme catalyses molybdate(out) + ATP + H2O = molybdate(in) + ADP + phosphate + H(+). Part of the ABC transporter complex ModABC involved in molybdenum import. Responsible for energy coupling to the transport system. This is Molybdenum import ATP-binding protein ModC from Shigella dysenteriae serotype 1 (strain Sd197).